The following is a 308-amino-acid chain: Cyclopropane mycolic acid synthase 2 (308 aa).

S-adenosyl-L-methionine-binding positions include 44–45, 79–87, 105–110, and 137–138; these read YS, LLDIGCGWG, TLSANQ, and WE. Cys-290 is an active-site residue.

Belongs to the CFA/CMAS family. In terms of assembly, homodimer.

The protein localises to the cytoplasm. The enzyme catalyses a 1-acyl-2-(9Z)-enoyl-sn-glycero-3-phospholipid + S-adenosyl-L-methionine = a 1-acyl-2-(9-cyclopronane)-acyl-sn-glycero-3-phospholipid + S-adenosyl-L-homocysteine + H(+). It functions in the pathway lipid metabolism; mycolic acid biosynthesis. Catalyzes the formation of trans cyclopropanated ketomycolate or methoxymycolate through the conversion of a double bond to a cyclopropane ring at the proximal position of an oxygenated mycolic acid via the transfer of a methylene group from S-adenosyl-L-methionine. In the absence of MmaA2, CmaA2 has a non-specific cis-cyclopropanating activity and is able to catalyze the conversion of a double bond to a cis cyclopropane ring at the distal position of an alpha mycolic acid. Cyclopropanated mycolic acids are key factors participating in cell envelope permeability, host immunomodulation and persistence. In Mycobacterium leprae (strain TN), this protein is Cyclopropane mycolic acid synthase 2 (cmaA2).